A 384-amino-acid polypeptide reads, in one-letter code: Putative 8-amino-7-oxononanoate synthase (384 aa).

A substrate-binding site is contributed by arginine 19. 106–107 is a pyridoxal 5'-phosphate binding site; it reads GY. Position 131 (histidine 131) interacts with substrate. Pyridoxal 5'-phosphate contacts are provided by residues serine 177, 202 to 205, and 233 to 236; these read DDAH and TLSK. Position 236 is an N6-(pyridoxal phosphate)lysine (lysine 236).

This sequence belongs to the class-II pyridoxal-phosphate-dependent aminotransferase family. BioF subfamily. In terms of assembly, homodimer. It depends on pyridoxal 5'-phosphate as a cofactor.

It carries out the reaction 6-carboxyhexanoyl-[ACP] + L-alanine + H(+) = (8S)-8-amino-7-oxononanoate + holo-[ACP] + CO2. It functions in the pathway cofactor biosynthesis; biotin biosynthesis. Functionally, catalyzes the decarboxylative condensation of pimeloyl-[acyl-carrier protein] and L-alanine to produce 8-amino-7-oxononanoate (AON), [acyl-carrier protein], and carbon dioxide. This is Putative 8-amino-7-oxononanoate synthase (bioF) from Desulforudis audaxviator (strain MP104C).